The following is a 195-amino-acid chain: HTH-type transcriptional regulator BetI (195 aa).

The HTH tetR-type domain maps to 8 to 68 (EIRRAQLIDA…ATMRHVLRDL (61 aa)). The segment at residues 31 to 50 (TLASVAQRASISTGIVSHYF) is a DNA-binding region (H-T-H motif).

It functions in the pathway amine and polyamine biosynthesis; betaine biosynthesis via choline pathway [regulation]. Its function is as follows. Repressor involved in the biosynthesis of the osmoprotectant glycine betaine. It represses transcription of the choline transporter BetT and the genes of BetAB involved in the synthesis of glycine betaine. In Paraburkholderia xenovorans (strain LB400), this protein is HTH-type transcriptional regulator BetI.